The primary structure comprises 448 residues: Homogentisate 1,2-dioxygenase (448 aa).

Catalysis depends on His-303, which acts as the Proton acceptor. The Fe cation site is built by His-346 and Glu-352. Homogentisate is bound by residues Tyr-361 and His-382. Residue His-382 coordinates Fe cation.

The protein belongs to the homogentisate dioxygenase family. As to quaternary structure, hexamer; dimer of trimers. The cofactor is Fe cation.

The catalysed reaction is homogentisate + O2 = 4-maleylacetoacetate + H(+). It participates in amino-acid degradation; L-phenylalanine degradation; acetoacetate and fumarate from L-phenylalanine: step 4/6. Functionally, involved in the catabolism of homogentisate (2,5-dihydroxyphenylacetate or 2,5-OH-PhAc), a central intermediate in the degradation of phenylalanine and tyrosine. Catalyzes the oxidative ring cleavage of the aromatic ring of homogentisate to yield maleylacetoacetate. This Rhodopseudomonas palustris (strain HaA2) protein is Homogentisate 1,2-dioxygenase.